A 289-amino-acid polypeptide reads, in one-letter code: ATP synthase gamma chain (289 aa).

It belongs to the ATPase gamma chain family. In terms of assembly, F-type ATPases have 2 components, CF(1) - the catalytic core - and CF(0) - the membrane proton channel. CF(1) has five subunits: alpha(3), beta(3), gamma(1), delta(1), epsilon(1). CF(0) has three main subunits: a, b and c.

Its subcellular location is the cell inner membrane. Produces ATP from ADP in the presence of a proton gradient across the membrane. The gamma chain is believed to be important in regulating ATPase activity and the flow of protons through the CF(0) complex. The polypeptide is ATP synthase gamma chain (Mannheimia succiniciproducens (strain KCTC 0769BP / MBEL55E)).